The chain runs to 433 residues: Pyrimidine-nucleoside phosphorylase (433 aa).

81–83 contacts phosphate; sequence KHS. K(+) contacts are provided by Gly88 and Thr90. Residues Thr92, 108–110, and Thr120 contribute to the phosphate site; that span reads KMS. Substrate is bound by residues Arg168 and Lys187. The K(+) site is built by Leu243, Ala246, and Glu255.

The protein belongs to the thymidine/pyrimidine-nucleoside phosphorylase family. In terms of assembly, homodimer. Requires K(+) as cofactor.

The enzyme catalyses uridine + phosphate = alpha-D-ribose 1-phosphate + uracil. It carries out the reaction thymidine + phosphate = 2-deoxy-alpha-D-ribose 1-phosphate + thymine. The catalysed reaction is 2'-deoxyuridine + phosphate = 2-deoxy-alpha-D-ribose 1-phosphate + uracil. Functionally, catalyzes phosphorolysis of the pyrimidine nucleosides uridine, thymidine and 2'-deoxyuridine with the formation of the corresponding pyrimidine base and ribose-1-phosphate. The sequence is that of Pyrimidine-nucleoside phosphorylase (pdp) from Staphylococcus aureus (strain MSSA476).